The primary structure comprises 523 residues: 2-isopropylmalate synthase (523 aa).

The Pyruvate carboxyltransferase domain maps to 12-274; the sequence is VVIFDTTLRD…WNKIDTTQLT (263 aa). Mn(2+) is bound by residues D21, H209, H211, and N245. The interval 398–523 is regulatory domain; that stretch reads KLLSLSVIAG…AQGAAAAAAS (126 aa).

Belongs to the alpha-IPM synthase/homocitrate synthase family. LeuA type 1 subfamily. As to quaternary structure, homodimer. Mn(2+) serves as cofactor.

The protein resides in the cytoplasm. The catalysed reaction is 3-methyl-2-oxobutanoate + acetyl-CoA + H2O = (2S)-2-isopropylmalate + CoA + H(+). It participates in amino-acid biosynthesis; L-leucine biosynthesis; L-leucine from 3-methyl-2-oxobutanoate: step 1/4. Functionally, catalyzes the condensation of the acetyl group of acetyl-CoA with 3-methyl-2-oxobutanoate (2-ketoisovalerate) to form 3-carboxy-3-hydroxy-4-methylpentanoate (2-isopropylmalate). The protein is 2-isopropylmalate synthase of Bradyrhizobium sp. (strain BTAi1 / ATCC BAA-1182).